A 219-amino-acid chain; its full sequence is Glycosylphosphatidylinositol anchor biosynthesis protein 11 (219 aa).

Residues 1-45 (MPAKKRTRKTVKKTVSFSDDTTLTTHQNREKKNVDHDRPPVYVRK) are Cytoplasmic-facing. A Phosphoserine modification is found at Ser16. A helical transmembrane segment spans residues 46–66 (TPLMTFPYHLVALLYYYVFVS). A topological domain (lumenal) is located at residue Ser67. Residues 68 to 88 (NFNTVKLLSFLIPTQVAYLVL) traverse the membrane as a helical segment. The Cytoplasmic portion of the chain corresponds to 89–108 (QFNKCTVYGNKIIKINYSLT). The helical transmembrane segment at 109–129 (IICLGVTFLLSFPTMLLTILF) threads the bilayer. The Lumenal portion of the chain corresponds to 130–135 (GAPLMD). The chain crosses the membrane as a helical span at residues 136 to 156 (LLWETWLLSLHFAFLAYPAVY). At 157–170 (SVFNCDFKVGLWKK) the chain is on the cytoplasmic side. Residues 171–191 (YFIFIVVGGWISCVVIPLDWD) traverse the membrane as a helical segment. Over 192 to 198 (RDWQNWP) the chain is Lumenal. The helical transmembrane segment at 199-217 (IPIVVGGYLGALVGYTIGA) threads the bilayer. Topologically, residues 218-219 (YI) are cytoplasmic.

This sequence belongs to the PIGF family.

Its subcellular location is the endoplasmic reticulum membrane. It participates in glycolipid biosynthesis; glycosylphosphatidylinositol-anchor biosynthesis. Its function is as follows. Acts in the GPI biosynthetic pathway between GlcNAc-PI synthesis and GPI transfer to protein. Required for the formation of complete GPI precursors CP1 and CP2. This chain is Glycosylphosphatidylinositol anchor biosynthesis protein 11 (GPI11), found in Saccharomyces cerevisiae (strain ATCC 204508 / S288c) (Baker's yeast).